The following is an 860-amino-acid chain: Valine--tRNA ligase (860 aa).

The 'HIGH' region signature appears at 53–63 (PNLTGILHIGH). The 'KMSKS' region signature appears at 527–531 (KMSKS). An ATP-binding site is contributed by Lys-530. Residues 794-860 (QDKTKIVDKL…LKQDKLNSLK (67 aa)) adopt a coiled-coil conformation.

This sequence belongs to the class-I aminoacyl-tRNA synthetase family. ValS type 1 subfamily. In terms of assembly, monomer.

Its subcellular location is the cytoplasm. It carries out the reaction tRNA(Val) + L-valine + ATP = L-valyl-tRNA(Val) + AMP + diphosphate. Its function is as follows. Catalyzes the attachment of valine to tRNA(Val). As ValRS can inadvertently accommodate and process structurally similar amino acids such as threonine, to avoid such errors, it has a 'posttransfer' editing activity that hydrolyzes mischarged Thr-tRNA(Val) in a tRNA-dependent manner. This is Valine--tRNA ligase from Mycoplasmoides gallisepticum (strain R(low / passage 15 / clone 2)) (Mycoplasma gallisepticum).